The chain runs to 175 residues: Electron transport protein HydN (175 aa).

4 4Fe-4S ferredoxin-type domains span residues 2–32 (NRFI…NQDC), 48–79 (KGVN…SRDK), 80–109 (GFVH…VVVR), and 124–157 (DKAE…CVDR). [4Fe-4S] cluster contacts are provided by cysteine 12, cysteine 15, cysteine 18, cysteine 22, cysteine 58, cysteine 61, cysteine 66, cysteine 70, cysteine 89, cysteine 92, cysteine 95, cysteine 99, cysteine 131, cysteine 134, cysteine 143, and cysteine 147.

[4Fe-4S] cluster serves as cofactor.

Functionally, electron transport from formate to hydrogen. This chain is Electron transport protein HydN (hydN), found in Escherichia coli O157:H7.